We begin with the raw amino-acid sequence, 349 residues long: Hydroxymethylglutaryl-CoA synthase (349 aa).

(3S)-3-hydroxy-3-methylglutaryl-CoA is bound by residues Asp29 and Ala30. Glu81 acts as the Proton donor/acceptor in catalysis. Positions 113 and 154 each coordinate (3S)-3-hydroxy-3-methylglutaryl-CoA. Cys113 (acyl-thioester intermediate) is an active-site residue. Arg202 provides a ligand contact to CoA. Positions 204 and 237 each coordinate (3S)-3-hydroxy-3-methylglutaryl-CoA. His237 functions as the Proton donor/acceptor in the catalytic mechanism. Position 242 (Lys242) interacts with CoA. (3S)-3-hydroxy-3-methylglutaryl-CoA-binding residues include Lys246, Asn269, and Ser299.

This sequence belongs to the thiolase-like superfamily. Archaeal HMG-CoA synthase family. Interacts with acetoacetyl-CoA thiolase that catalyzes the precedent step in the pathway and with a DUF35 protein. The acetoacetyl-CoA thiolase/HMG-CoA synthase complex channels the intermediate via a fused CoA-binding site, which allows for efficient coupling of the endergonic thiolase reaction with the exergonic HMGCS reaction.

It carries out the reaction acetoacetyl-CoA + acetyl-CoA + H2O = (3S)-3-hydroxy-3-methylglutaryl-CoA + CoA + H(+). Its pathway is metabolic intermediate biosynthesis; (R)-mevalonate biosynthesis; (R)-mevalonate from acetyl-CoA: step 2/3. Functionally, catalyzes the condensation of acetyl-CoA with acetoacetyl-CoA to form 3-hydroxy-3-methylglutaryl-CoA (HMG-CoA). Functions in the mevalonate (MVA) pathway leading to isopentenyl diphosphate (IPP), a key precursor for the biosynthesis of isoprenoid compounds that are building blocks of archaeal membrane lipids. The protein is Hydroxymethylglutaryl-CoA synthase of Methanosarcina mazei (strain ATCC BAA-159 / DSM 3647 / Goe1 / Go1 / JCM 11833 / OCM 88) (Methanosarcina frisia).